The chain runs to 185 residues: piRNA-mediated silencing protein C19orf84 homolog (185 aa).

Disordered stretches follow at residues 1 to 38 (MDEL…PSLL) and 93 to 185 (HIWP…EADY). A compositionally biased stretch (polar residues) spans 11-25 (NGDNLSLPSAGTESW). The span at 26 to 38 (PTSATPGLPPSLL) shows a compositional bias: low complexity. Positions 118-130 (RPSRGWGRGRGRG) are enriched in basic residues. Basic and acidic residues predominate over residues 139–150 (GPERAEERERNM).

In terms of assembly, interacts with SPOCD1.

It is found in the nucleus. It localises to the nucleoplasm. Protein adapter involved in piRNA-directed transposon methylation by connecting PIWIL4-piRNA and DNA methylation machineries. The PIWIL4-piRNA pathway plays a central role during spermatogenesis by directing transposon DNA methylation and silencing, thereby preventing their mobilization, which is essential for the germline integrity. The chain is piRNA-mediated silencing protein C19orf84 homolog from Mus musculus (Mouse).